Reading from the N-terminus, the 207-residue chain is Small ribosomal subunit protein uS4 (207 aa).

One can recognise an S4 RNA-binding domain in the interval 96 to 156 (RRLDNVVYRL…EKFKTSSFIA (61 aa)).

It belongs to the universal ribosomal protein uS4 family. In terms of assembly, part of the 30S ribosomal subunit. Contacts protein S5. The interaction surface between S4 and S5 is involved in control of translational fidelity.

Functionally, one of the primary rRNA binding proteins, it binds directly to 16S rRNA where it nucleates assembly of the body of the 30S subunit. Its function is as follows. With S5 and S12 plays an important role in translational accuracy. The protein is Small ribosomal subunit protein uS4 of Leptospira interrogans serogroup Icterohaemorrhagiae serovar copenhageni (strain Fiocruz L1-130).